We begin with the raw amino-acid sequence, 1093 residues long: Synaptopodin-2 (1093 aa).

The tract at residues 1-180 (MGTGDFICIS…PDSQRGRVAE (180 aa)) is interaction with VPS18. Residues 6–88 (FICISMTGGA…SLQMLIKRPS (83 aa)) enclose the PDZ domain. 2 disordered regions span residues 144–174 (ENQRSGPDCAGSLKEETGPSYQRAPQMPDSQ) and 211–233 (ASGPLVALPGAEKSKSPDPDPNL). The span at 222–233 (EKSKSPDPDPNL) shows a compositional bias: basic and acidic residues. Residues Ser274, Ser310, Ser329, and Ser330 each carry the phosphoserine modification. A disordered region spans residues 329 to 369 (SSEGTEQGEDPRSEKDHSRPHKHRARHARLRRSESLSEKQV). Position 333 is a phosphothreonine (Thr333). Residues 346–358 (SRPHKHRARHARL) are compositionally biased toward basic residues. Residues 359-369 (RRSESLSEKQV) are compositionally biased toward basic and acidic residues. The Nuclear localization signal signature appears at 398-406 (KKRRRRARK). Interaction with ACTN2 regions lie at residues 481-663 (MEML…FYDS), 664-924 (SERI…PPVA), and 901-1093 (QSPT…VVEE). 2 disordered regions span residues 507–803 (AQKE…GTVV) and 834–870 (AVASQNYTPKPTVSTPTVNAVQPGAVGPSNELPGMSG). 2 F-actin binding regions span residues 534–663 (TSYQ…FYDS) and 664–803 (SERI…GTVV). Phosphoserine is present on residues Ser548, Ser549, and Ser551. 2 stretches are compositionally biased toward polar residues: residues 565–579 (PQQNGFSGTSETANI) and 595–611 (SVNQPATPFSPTRNMTS). Position 604 is a phosphoserine (Ser604). The interval 607–811 (RNMTSPIADF…VVSSIKIAQP (205 aa)) is interaction with YWHAB. Position 610 is a phosphothreonine (Thr610). Ser611 carries the phosphoserine modification. Positions 615-626 (DFPAPPPYSAVT) are interaction with BAG3. Pro residues-rich tracts occupy residues 617–630 (PAPPPYSAVTPPPD) and 644–655 (AQPPPWPQPAPW). Positions 619–622 (PPPY) match the PPPY motif motif. Position 622 is a phosphotyrosine (Tyr622). Position 626 is a phosphothreonine (Thr626). Residues 663-674 (SSERIASRDERI) show a composition bias toward basic and acidic residues. The tract at residues 664 to 916 (SERIASRDER…LPASWKYSSN (253 aa)) is F-actin bundling activity. Phosphoserine occurs at positions 705 and 729. The tract at residues 751-900 (AKQKTPPPVA…DTVQAHAARA (150 aa)) is actin binding. Thr755 and Thr774 each carry phosphothreonine. Positions 762 to 784 (KPAVKSSSSQPVTPVSPVWSPGV) are enriched in low complexity. Residues Ser777 and Ser781 each carry the phosphoserine modification. 2 stretches are compositionally biased toward polar residues: residues 793 to 803 (PTSNPSKGTVV) and 835 to 853 (VASQNYTPKPTVSTPTVNA). The segment at 810–1093 (QPSYPPARPA…QVWKPSVVEE (284 aa)) is interaction with FLNC. Phosphoserine occurs at positions 902, 906, and 910. A disordered region spans residues 937 to 956 (ALKSQPSAAQPSKMGKKKGK). Residues 1000–1019 (LAMKQALPPRPVNAASPTNV) form an interaction with ZYX region. The residue at position 1015 (Ser1015) is a Phosphoserine. Low complexity predominate over residues 1041-1050 (SSPVSASPVP). Residues 1041–1064 (SSPVSASPVPVGIPTSPKQESASS) are disordered. Phosphoserine is present on Ser1056.

The protein belongs to the synaptopodin family. In terms of assembly, may self-associate in muscle cells under oxidative stress. Binds F-actin. Interacts with ACTN2; ACTN2 is proposed to anchor SYOP2 at Z lines in mature myocytes. Interacts with AKAP6, PPP3CA and CAMK2A. Interacts (phosphorylated form) with YWHAB; YWHAB competes with ACTN2 for interaction with SYNPO2. Interacts with KPNA2; mediating nuclear import of SYNOP2; dependent on interaction with YWHAB. Interacts with IPO13; may be implicated in SYNOP2 nuclear import. Interacts with ZYX, FLNC, ILK. Interacts with BAG3 (via WW 1 domain). May associate with the CASA complex consisting of HSPA8, HSPB8 and BAG3. Interacts with VPS18. Phosphorylated by PKA, and by CaMK2 at multiple sites. Dephosphorylated by calcineurin; abrogating interaction with YWHAB and impairing nuclear import. Phosphorylated by ILK. Expressed in heart muscle. Isoform 5 is specifically expressed in skeletal muscle.

The protein resides in the nucleus. It is found in the cytoplasm. Its subcellular location is the cytoskeleton. It localises to the myofibril. The protein localises to the sarcomere. The protein resides in the z line. It is found in the cell junction. Its subcellular location is the focal adhesion. Has an actin-binding and actin-bundling activity. Can induce the formation of F-actin networks in an isoform-specific manner. At the sarcomeric Z lines is proposed to act as adapter protein that links nascent myofibers to the sarcolemma via ZYX and may play a role in early assembly and stabilization of the Z lines. Involved in autophagosome formation. May play a role in chaperone-assisted selective autophagy (CASA) involved in Z lines maintenance in striated muscle under mechanical tension; may link the client-processing CASA chaperone machinery to a membrane-tethering and fusion complex providing autophagosome membranes. Involved in regulation of cell migration. May be a tumor suppressor. In terms of biological role, involved in regulation of cell migration. Can induce formation of thick, irregular actin bundles in the cell body. Its function is as follows. Involved in regulation of cell migration. Can induce long, well-organized actin bundles frequently orientated in parallel along the long axis of the cell showing characteristics of contractile ventral stress fibers. Functionally, involved in regulation of cell migration. Can induce an amorphous actin meshwork throughout the cell body containing a mixture of long and short, randomly organized thick and thin actin bundles. Can induce long, well-organized actin bundles frequently orientated in parallel along the long axis of the cell showing characteristics of contractile ventral stress fibers. In terms of biological role, involved in regulation of cell migration in part dependent on the Rho-ROCK cascade; can promote formation of nascent focal adhesions, actin bundles at the leading cell edge and lamellipodia. Can induce formation of thick, irregular actin bundles in the cell body; the induced actin network is associated with enhanced cell migration in vitro. This is Synaptopodin-2 (SYNPO2) from Homo sapiens (Human).